The primary structure comprises 207 residues: Guanylate kinase (207 aa).

Residues 5-184 (GNLFIVSAPS…ALADLRAIIR (180 aa)) form the Guanylate kinase-like domain. Position 12 to 19 (12 to 19 (APSGAGKS)) interacts with ATP.

This sequence belongs to the guanylate kinase family.

It localises to the cytoplasm. The enzyme catalyses GMP + ATP = GDP + ADP. Its function is as follows. Essential for recycling GMP and indirectly, cGMP. The sequence is that of Guanylate kinase from Shewanella sp. (strain MR-7).